A 142-amino-acid polypeptide reads, in one-letter code: MKFYLYLSILLILLTSTSFGDIWSNCGPNEKFKITSVSIVPDPPVKGKLITISGSGVLGENLTSGQVAILVKFGLITLINEKKDICTLPGSPYKCPIKEGEYSHTINFTIPEAAPNGKYTGHVSVTDQESSEIACIDVTLTL.

An N-terminal signal peptide occupies residues 1-20 (MKFYLYLSILLILLTSTSFG).

Belongs to the NPC2 family. In terms of assembly, monomer.

Catalyzes the intermembrane transfer of phosphatidylglycerol and phosphatidylinositol. This is Putative phosphatidylglycerol/phosphatidylinositol transfer protein 2 from Dictyostelium discoideum (Social amoeba).